Here is a 313-residue protein sequence, read N- to C-terminus: Ribosomal RNA small subunit methyltransferase H (313 aa).

Residues 35-37, Asp55, Phe79, Asp101, and Gln108 each bind S-adenosyl-L-methionine; that span reads GGH.

It belongs to the methyltransferase superfamily. RsmH family.

The protein localises to the cytoplasm. It catalyses the reaction cytidine(1402) in 16S rRNA + S-adenosyl-L-methionine = N(4)-methylcytidine(1402) in 16S rRNA + S-adenosyl-L-homocysteine + H(+). Specifically methylates the N4 position of cytidine in position 1402 (C1402) of 16S rRNA. The protein is Ribosomal RNA small subunit methyltransferase H of Edwardsiella ictaluri (strain 93-146).